The primary structure comprises 450 residues: Tubulin alpha-5 chain (450 aa).

Q11, E71, G144, T145, T179, N206, and N228 together coordinate GTP. A Mg(2+)-binding site is contributed by E71. E254 is a catalytic residue. T349 is subject to Phosphothreonine. The tract at residues 429-450 (EKDYEEVGAEGGDDEEDEGEDY) is disordered. Residues 431–450 (DYEEVGAEGGDDEEDEGEDY) show a composition bias toward acidic residues.

This sequence belongs to the tubulin family. In terms of assembly, dimer of alpha and beta chains. A typical microtubule is a hollow water-filled tube with an outer diameter of 25 nm and an inner diameter of 15 nM. Alpha-beta heterodimers associate head-to-tail to form protofilaments running lengthwise along the microtubule wall with the beta-tubulin subunit facing the microtubule plus end conferring a structural polarity. Microtubules usually have 13 protofilaments but different protofilament numbers can be found in some organisms and specialized cells. Mg(2+) serves as cofactor. Post-translationally, undergoes a tyrosination/detyrosination cycle, the cyclic removal and re-addition of a C-terminal tyrosine residue by the enzymes tubulin tyrosine carboxypeptidase (TTCP) and tubulin tyrosine ligase (TTL), respectively.

It is found in the cytoplasm. The protein localises to the cytoskeleton. The catalysed reaction is GTP + H2O = GDP + phosphate + H(+). Tubulin is the major constituent of microtubules, a cylinder consisting of laterally associated linear protofilaments composed of alpha- and beta-tubulin heterodimers. Microtubules grow by the addition of GTP-tubulin dimers to the microtubule end, where a stabilizing cap forms. Below the cap, tubulin dimers are in GDP-bound state, owing to GTPase activity of alpha-tubulin. This Arabidopsis thaliana (Mouse-ear cress) protein is Tubulin alpha-5 chain (TUBA5).